Here is a 78-residue protein sequence, read N- to C-terminus: Exodeoxyribonuclease 7 small subunit (78 aa).

Belongs to the XseB family. As to quaternary structure, heterooligomer composed of large and small subunits.

It is found in the cytoplasm. It catalyses the reaction Exonucleolytic cleavage in either 5'- to 3'- or 3'- to 5'-direction to yield nucleoside 5'-phosphates.. Bidirectionally degrades single-stranded DNA into large acid-insoluble oligonucleotides, which are then degraded further into small acid-soluble oligonucleotides. The sequence is that of Exodeoxyribonuclease 7 small subunit from Cutibacterium acnes (strain DSM 16379 / KPA171202) (Propionibacterium acnes).